The chain runs to 171 residues: Co-chaperone protein HscB homolog (171 aa).

One can recognise a J domain in the interval 2-74 (NHFELFGLPS…ISRAEYILAE (73 aa)).

It belongs to the HscB family. Interacts with HscA and stimulates its ATPase activity.

Its function is as follows. Co-chaperone involved in the maturation of iron-sulfur cluster-containing proteins. Seems to help targeting proteins to be folded toward HscA. The chain is Co-chaperone protein HscB homolog from Vibrio campbellii (strain ATCC BAA-1116).